The primary structure comprises 138 residues: Small ribosomal subunit protein uS11c (138 aa).

This sequence belongs to the universal ribosomal protein uS11 family. As to quaternary structure, part of the 30S ribosomal subunit.

The protein resides in the plastid. The protein is Small ribosomal subunit protein uS11c of Cuscuta obtusiflora (Peruvian dodder).